The following is a 1249-amino-acid chain: Cell adhesion molecule-related/down-regulated by oncogenes (1249 aa).

The N-terminal stretch at 1–25 (MHSDPGPWHPLLCFLVLALSTSANS) is a signal peptide. The Extracellular segment spans residues 26 to 957 (DVTPRFTSKP…PSHSPTRNGD (932 aa)). 5 Ig-like C2-type domains span residues 29-113 (PRFT…KSVS), 120-212 (NDFE…LKLS), 217-307 (PRVD…VYYT), 314-400 (PSVS…ATVH), and 406-517 (PVIV…AYLT). 3 disulfide bridges follow: Cys50–Cys98, Cys142–Cys192, and Cys244–Cys292. 5 N-linked (GlcNAc...) asparagine glycosylation sites follow: Asn181, Asn289, Asn296, Asn344, and Asn428. Intrachain disulfides connect Cys335/Cys382 and Cys427/Cys501. Disordered stretches follow at residues 528 to 585 (EDIT…SPPQ) and 671 to 690 (TSKE…PPIG). Residues 545–566 (SETRVPDHSQINEHKPEPRVTE) are compositionally biased toward basic and acidic residues. Fibronectin type-III domains are found at residues 577–675 (APII…SKER), 721–815 (APDR…VAGY), and 826–923 (GPRI…TKAR). A glycan (N-linked (GlcNAc...) asparagine) is linked at Asn870. A disordered region spans residues 929–952 (SEYPVLDLSTPSVPDRSSSPSHSP). The segment covering 937–952 (STPSVPDRSSSPSHSP) has biased composition (low complexity). The chain crosses the membrane as a helical span at residues 958–978 (FLYVIVGCVLGGMVLILLAFI). Residues 979-1249 (AMCLLKNRQQ…DHPQLQTQEA (271 aa)) are Cytoplasmic-facing. The segment at 1158–1202 (NCSEEIEEDQNEKETQLSANSVCPEEATQTGTEQHEGEDCTKTED) is disordered. Residues 1159–1168 (CSEEIEEDQN) are compositionally biased toward acidic residues. Residues 1173–1189 (QLSANSVCPEEATQTGT) show a composition bias toward polar residues. Residues 1190-1202 (EQHEGEDCTKTED) show a composition bias toward basic and acidic residues.

It is found in the cell membrane. In terms of biological role, component of a cell-surface receptor complex that mediates cell-cell interactions between muscle precursor cells. Promotes differentiation of myogenic cells. The polypeptide is Cell adhesion molecule-related/down-regulated by oncogenes (cdon) (Xenopus laevis (African clawed frog)).